A 212-amino-acid chain; its full sequence is 2-C-methyl-D-erythritol 4-phosphate cytidylyltransferase (212 aa).

This sequence belongs to the IspD/TarI cytidylyltransferase family. IspD subfamily.

It carries out the reaction 2-C-methyl-D-erythritol 4-phosphate + CTP + H(+) = 4-CDP-2-C-methyl-D-erythritol + diphosphate. It participates in isoprenoid biosynthesis; isopentenyl diphosphate biosynthesis via DXP pathway; isopentenyl diphosphate from 1-deoxy-D-xylulose 5-phosphate: step 2/6. Catalyzes the formation of 4-diphosphocytidyl-2-C-methyl-D-erythritol from CTP and 2-C-methyl-D-erythritol 4-phosphate (MEP). In Chlamydia felis (strain Fe/C-56) (Chlamydophila felis), this protein is 2-C-methyl-D-erythritol 4-phosphate cytidylyltransferase.